The primary structure comprises 223 residues: Endonuclease V (223 aa).

Mg(2+) is bound by residues D45 and D113.

This sequence belongs to the endonuclease V family. Mg(2+) serves as cofactor.

The protein resides in the cytoplasm. The catalysed reaction is Endonucleolytic cleavage at apurinic or apyrimidinic sites to products with a 5'-phosphate.. Functionally, DNA repair enzyme involved in the repair of deaminated bases. Selectively cleaves double-stranded DNA at the second phosphodiester bond 3' to a deoxyinosine leaving behind the intact lesion on the nicked DNA. This is Endonuclease V from Dehalococcoides mccartyi (strain CBDB1).